A 507-amino-acid polypeptide reads, in one-letter code: Protein FAM221B (507 aa).

Disordered regions lie at residues 1–100 (MEAD…SAQS), 154–310 (LLSP…ESRP), and 486–507 (ETKR…HRPF). Over residues 88–100 (NLPSTPSQSSAQS) the composition is skewed to polar residues. Residues 167–177 (SISDVQEEPLE) are compositionally biased toward acidic residues. The span at 182 to 193 (ADISETEYSISD) shows a compositional bias: polar residues. Composition is skewed to acidic residues over residues 208–222 (PESE…EEPL) and 270–281 (SADEEEAEEEEL). Ser270 carries the phosphoserine modification.

This sequence belongs to the FAM221 family.

This Rattus norvegicus (Rat) protein is Protein FAM221B (Fam221b).